The sequence spans 160 residues: Putative pre-16S rRNA nuclease (160 aa).

This sequence belongs to the YqgF nuclease family.

Its subcellular location is the cytoplasm. Its function is as follows. Could be a nuclease involved in processing of the 5'-end of pre-16S rRNA. The polypeptide is Putative pre-16S rRNA nuclease (Cereibacter sphaeroides (strain ATCC 17025 / ATH 2.4.3) (Rhodobacter sphaeroides)).